Consider the following 248-residue polypeptide: 5'-nucleotidase SurE (248 aa).

A divalent metal cation-binding residues include D8, D9, S39, and N91.

This sequence belongs to the SurE nucleotidase family. A divalent metal cation serves as cofactor.

It localises to the cytoplasm. It carries out the reaction a ribonucleoside 5'-phosphate + H2O = a ribonucleoside + phosphate. Functionally, nucleotidase that shows phosphatase activity on nucleoside 5'-monophosphates. In Neisseria meningitidis serogroup A / serotype 4A (strain DSM 15465 / Z2491), this protein is 5'-nucleotidase SurE.